The following is a 142-amino-acid chain: Large ribosomal subunit protein uL11 (142 aa).

This sequence belongs to the universal ribosomal protein uL11 family. In terms of assembly, part of the ribosomal stalk of the 50S ribosomal subunit. Interacts with L10 and the large rRNA to form the base of the stalk. L10 forms an elongated spine to which L12 dimers bind in a sequential fashion forming a multimeric L10(L12)X complex. One or more lysine residues are methylated.

Functionally, forms part of the ribosomal stalk which helps the ribosome interact with GTP-bound translation factors. The sequence is that of Large ribosomal subunit protein uL11 from Bartonella tribocorum (strain CIP 105476 / IBS 506).